The sequence spans 191 residues: Protein Ves (191 aa).

This sequence belongs to the Ves family.

This chain is Protein Ves, found in Escherichia coli O127:H6 (strain E2348/69 / EPEC).